The following is a 299-amino-acid chain: 33 kDa chaperonin (299 aa).

2 disulfides stabilise this stretch: C234/C236 and C268/C271.

This sequence belongs to the HSP33 family. Post-translationally, under oxidizing conditions two disulfide bonds are formed involving the reactive cysteines. Under reducing conditions zinc is bound to the reactive cysteines and the protein is inactive.

Its subcellular location is the cytoplasm. In terms of biological role, redox regulated molecular chaperone. Protects both thermally unfolding and oxidatively damaged proteins from irreversible aggregation. Plays an important role in the bacterial defense system toward oxidative stress. This is 33 kDa chaperonin from Pseudomonas putida (strain ATCC 47054 / DSM 6125 / CFBP 8728 / NCIMB 11950 / KT2440).